The sequence spans 889 residues: DNA mismatch repair protein MutS (889 aa).

641-648 (GPNMAGKS) lines the ATP pocket.

The protein belongs to the DNA mismatch repair MutS family.

Its function is as follows. This protein is involved in the repair of mismatches in DNA. It is possible that it carries out the mismatch recognition step. This protein has a weak ATPase activity. The polypeptide is DNA mismatch repair protein MutS (Orientia tsutsugamushi (strain Ikeda) (Rickettsia tsutsugamushi)).